The sequence spans 327 residues: Gibberellin 2-beta-dioxygenase 3 (327 aa).

The 106-residue stretch at 173–278 (GSDQVFRVNH…RVSFIYFGGP (106 aa)) folds into the Fe2OG dioxygenase domain. Residue Tyr-183 coordinates 2-oxoglutarate. Residues His-202, Asp-204, and His-259 each coordinate Fe cation. 2-oxoglutarate-binding residues include Arg-269 and Ser-271.

This sequence belongs to the iron/ascorbate-dependent oxidoreductase family. GA2OX subfamily. L-ascorbate is required as a cofactor. It depends on Fe(2+) as a cofactor. As to expression, expressed in roots, shoot apex, leaf blades, leaf sheaths, stems and flowers.

It catalyses the reaction gibberellin A1 + 2-oxoglutarate + O2 = gibberellin A8 + succinate + CO2. Catalyzes the 2-beta-hydroxylation of several biologically active gibberellins, leading to the homeostatic regulation of their endogenous level. Catabolism of gibberellins (GAs) plays a central role in plant development. In vitro, converts GA1, GA20, and GA29 to the corresponding 2-beta-hydroxylated products GA8, GA29-catabolite, respectively. This is Gibberellin 2-beta-dioxygenase 3 from Oryza sativa subsp. japonica (Rice).